The primary structure comprises 1439 residues: Probable histone acetyltransferase HAC-like 2 (1439 aa).

Disordered stretches follow at residues 1–43 (MKQG…ASAD) and 313–335 (YGIS…TPTP). The segment covering 325–335 (VNPSTRSTPTP) has biased composition (polar residues). The segment at 607-687 (ENTKQYHAQA…NEHCHVCCKA (81 aa)) adopts a TAZ-type zinc-finger fold. Residues 827–933 (KIHCHVQQET…EYTCFKCYIE (107 aa)) form a PHD-type; degenerate zinc finger. The region spanning 948 to 1383 (VRGAKDLPRT…MLYHLHNPTG (436 aa)) is the CBP/p300-type HAT domain. Residues 964–989 (EERLFKRLREERQERANKLKTSLDEV) adopt a coiled-coil conformation. Acetyl-CoA is bound by residues 1071–1073 (LDS), 1090–1091 (RT), and W1146. The segment at 1265–1328 (HLQYSCSHCC…ILHPVEIVGV (64 aa)) adopts a ZZ-type zinc-finger fold. Zn(2+) contacts are provided by C1270, C1273, C1285, C1288, C1294, C1297, H1310, and H1318.

Its subcellular location is the nucleus. It catalyses the reaction L-lysyl-[protein] + acetyl-CoA = N(6)-acetyl-L-lysyl-[protein] + CoA + H(+). In terms of biological role, acetyltransferase enzyme. Acetylates histones, giving a specific tag for transcriptional activation. In Oryza sativa subsp. japonica (Rice), this protein is Probable histone acetyltransferase HAC-like 2.